The sequence spans 751 residues: Meiotic sister-chromatid recombination protein 3 (751 aa).

5 disordered regions span residues 54–88, 216–290, 314–410, 431–504, and 558–610; these read GVGMGRTQSLTGYGRTRSLGAARPSYLGAPPRTYS, LRAP…KKQM, PALE…EARF, TQEN…RPSF, and KDVP…SPPQ. Residues 216–228 show a composition bias toward low complexity; the sequence is LRAPPRVQQQRQL. Basic and acidic residues-rich tracts occupy residues 345–356 and 384–393; these read ERSRPAKREVRK and ERVHNKEKTL. The segment covering 431–496 has biased composition (polar residues); the sequence is TQENSTRDNG…GCETGNTTPK (66 aa). Low complexity predominate over residues 596–609; that stretch reads RSSISSSPRRSSPP.

It localises to the cell membrane. Functionally, may be involved in the control of meiotic sister-chromatid recombination. This is Meiotic sister-chromatid recombination protein 3 (MSC3) from Eremothecium gossypii (strain ATCC 10895 / CBS 109.51 / FGSC 9923 / NRRL Y-1056) (Yeast).